Reading from the N-terminus, the 381-residue chain is L-lactate dehydrogenase (381 aa).

The FMN hydroxy acid dehydrogenase domain occupies 1–380 (MIISASTDYR…TRDSLVRELG (380 aa)). Tyr24 is a substrate binding site. The FMN site is built by Ser106 and Gln127. Position 129 (Tyr129) interacts with substrate. An FMN-binding site is contributed by Thr155. Arg164 provides a ligand contact to substrate. An FMN-binding site is contributed by Lys251. Catalysis depends on His275, which acts as the Proton acceptor. Arg278 contacts substrate. 306–330 (DSGIRSGLDVVRMIALGADTVLIGR) is a binding site for FMN.

The protein belongs to the FMN-dependent alpha-hydroxy acid dehydrogenase family. Homotetramer. FMN serves as cofactor.

It is found in the cell inner membrane. It catalyses the reaction (S)-lactate + A = pyruvate + AH2. Catalyzes the conversion of L-lactate to pyruvate. Is coupled to the respiratory chain. The protein is L-lactate dehydrogenase of Pseudomonas putida (strain GB-1).